Here is a 211-residue protein sequence, read N- to C-terminus: Large ribosomal subunit protein uL4 (211 aa).

Disordered regions lie at residues methionine 1–proline 28 and threonine 48–tyrosine 99. Over residues arginine 10–proline 28 the composition is skewed to basic and acidic residues.

It belongs to the universal ribosomal protein uL4 family. In terms of assembly, part of the 50S ribosomal subunit.

One of the primary rRNA binding proteins, this protein initially binds near the 5'-end of the 23S rRNA. It is important during the early stages of 50S assembly. It makes multiple contacts with different domains of the 23S rRNA in the assembled 50S subunit and ribosome. Functionally, forms part of the polypeptide exit tunnel. The protein is Large ribosomal subunit protein uL4 of Rubrobacter xylanophilus (strain DSM 9941 / JCM 11954 / NBRC 16129 / PRD-1).